Here is an 886-residue protein sequence, read N- to C-terminus: Peptidyl-lysine N-acetyltransferase Pat (886 aa).

The ATP-grasp domain occupies 487 to 523 (QPILHAYGLHTLPTWIASDSAEAVHIAEQIGYPVALK). 513–524 (AEQIGYPVALKL) is an ATP binding site. Residues 726–881 (CLFRPILPED…GIVGLTLNLA (156 aa)) form the N-acetyltransferase domain.

The protein in the N-terminal section; belongs to the acetate CoA ligase alpha subunit family. In the central section; belongs to the acetate CoA ligase beta subunit family. As to quaternary structure, monomer in the absence of acetyl-CoA. Oligomerizes to a tetrameric form in the presence of acetyl-CoA.

The catalysed reaction is L-lysyl-[protein] + acetyl-CoA = N(6)-acetyl-L-lysyl-[protein] + CoA + H(+). With respect to regulation, exhibits positive cooperativity. It may be the result of acetyl-CoA binding to two distinct sites, or the result of subunit interactions. Acetylates and inactivates the acetyl-CoA synthase (Acs). Can also acetylate other central metabolic enzymes in response to environmental changes. This chain is Peptidyl-lysine N-acetyltransferase Pat (pat), found in Salmonella typhimurium (strain LT2 / SGSC1412 / ATCC 700720).